The chain runs to 440 residues: Xylose isomerase (440 aa).

Catalysis depends on residues His-101 and Asp-104. Mg(2+) contacts are provided by Glu-232, Glu-268, His-271, Asp-296, Asp-307, Asp-309, and Asp-339.

Belongs to the xylose isomerase family. Homotetramer. Mg(2+) serves as cofactor.

The protein resides in the cytoplasm. It catalyses the reaction alpha-D-xylose = alpha-D-xylulofuranose. In Escherichia coli (strain SE11), this protein is Xylose isomerase.